Consider the following 31-residue polypeptide: GSIPCGESCVYIPCISSIVGCACKSKVCYKN.

Residues 1-31 constitute a cross-link (cyclopeptide (Gly-Asn)); that stretch reads GSIPCGESCVYIPCISSIVGCACKSKVCYKN. Disulfide bonds link Cys-5-Cys-21, Cys-9-Cys-23, and Cys-14-Cys-28.

This sequence belongs to the cyclotide family. Bracelet subfamily. Post-translationally, this is a cyclic peptide.

In terms of biological role, probably participates in a plant defense mechanism. The sequence is that of Cyclotide mden-J from Melicytus dentatus (Tree violet).